We begin with the raw amino-acid sequence, 618 residues long: DNA mismatch repair protein MutL (618 aa).

Positions 348–359 are enriched in polar residues; the sequence is QTDTARSPTGNF. Residues 348–400 are disordered; sequence QTDTARSPTGNFESGEVFDYPKSQLQPSHSVSSGGASLGSRSAGGSGGAYRAT. The segment covering 377–388 has biased composition (low complexity); the sequence is SVSSGGASLGSR.

This sequence belongs to the DNA mismatch repair MutL/HexB family.

Functionally, this protein is involved in the repair of mismatches in DNA. It is required for dam-dependent methyl-directed DNA mismatch repair. May act as a 'molecular matchmaker', a protein that promotes the formation of a stable complex between two or more DNA-binding proteins in an ATP-dependent manner without itself being part of a final effector complex. This is DNA mismatch repair protein MutL from Pseudoalteromonas translucida (strain TAC 125).